Here is a 330-residue protein sequence, read N- to C-terminus: Succinoglycan biosynthesis protein ExoA (330 aa).

3 consecutive transmembrane segments (helical) span residues alanine 116–phenylalanine 136, isoleucine 260–tryptophan 280, and tyrosine 299–tryptophan 319.

Belongs to the glycosyltransferase 2 family.

The protein localises to the cell membrane. It participates in glycan metabolism; exopolysaccharide biosynthesis. Its function is as follows. Glycosyltransferase required for the synthesis of succinoglycan (EPS I). Needed for the addition of the second sugar (glucose). Catalyzes the formation of a beta-1,3 linkage with the galactose lipid carrier. The chain is Succinoglycan biosynthesis protein ExoA (exoA) from Rhizobium meliloti (strain 1021) (Ensifer meliloti).